The following is a 612-amino-acid chain: MDKNTIIGFILIFWVLFGFAYLNHNRPIQEQLEKNPPMSANSVKKEFSNPISEIQSSDIYGNFAASTKGTETFVTIQNALMEIKLSTKGGRIYSVRLKKYTNYKNEPLYLFEGDESAFNIIFISSNNKVLNSEDFYFEIVSNSELETILRLNAGKNRYIDFVYTLHPDDYMVDWKLVSHNIQTELSHSMHTLNIQWMQKIRQQEKGRKFEERYARLTYKFLTDDIEQLRETKDDVRNVPNKLKWIGYKDQFFSSVFIVHSNFESAKLDSKYLTYGAYIKEYSTSTSIPYNIANIEPIKFNFYFGPNDYSLLKSYDKTKLKEQNLELEKLVPLGWSLFRAINKCLIIPIFNWLTNGENVNLGLAILILTLIIKIALFPLTYKSFISSAKMRVLKPQVENINIKYSGQEKALIRQQKTMELYRQVGVNPMTGCFPILLQMPFLIALFMFFPSAIGLRHQSFLWANDLSTYDTLIQWSTDIPFIPRFLGNHISLFCLLMSLATILNTRYNTMYQQNIGQEQFPGMKLTMYFMPVVMFFFLNSYPAGLNYYYLISTLITIMQTIIFRGLVNELNLLAKLEANKKKSKLVKKKFGFMDRLEEFQRKQQELLKKKRKR.

7 helical membrane passes run 4-24 (NTII…YLNH), 329-349 (LVPL…IPIF), 358-378 (VNLG…LFPL), 434-454 (ILLQ…AIGL), 484-504 (FLGN…ILNT), 524-544 (LTMY…PAGL), and 546-566 (YYYL…RGLV).

It belongs to the OXA1/ALB3/YidC family. Type 1 subfamily. As to quaternary structure, interacts with the Sec translocase complex via SecD. Specifically interacts with transmembrane segments of nascent integral membrane proteins during membrane integration.

It is found in the cell inner membrane. In terms of biological role, required for the insertion and/or proper folding and/or complex formation of integral membrane proteins into the membrane. Involved in integration of membrane proteins that insert both dependently and independently of the Sec translocase complex, as well as at least some lipoproteins. Aids folding of multispanning membrane proteins. The sequence is that of Membrane protein insertase YidC from Azobacteroides pseudotrichonymphae genomovar. CFP2.